The sequence spans 111 residues: 4'-hydroxy-3'-methoxypropiophenone carrier protein ppsC (111 aa).

The tract at residues 1–21 is disordered; that stretch reads MSAQVMRPGTPQHEGQEFLSG.

It functions in the pathway secondary metabolite biosynthesis. Its function is as follows. 4'-hydroxy-3'-methoxypropiophenone carrier protein; part of the gene cluster that mediates the biosynthesis of 2,4'-dihydroxy-3'-methoxypropiophenone. The first step of the pathway is the conversion of acetate into acetyl-CoA by the acyl-CoA ligase ppsA. Acetyl-CoA is then used as a starter unit by the polyketide synthase ppsB and condensed with 4 malonyl-CoA unit to produce the pentaketide backbone. During polyketide extension, the polykedite chain is probably reduced and dehydrated by the KR and PT domains, respectively. O-methylation seems to be catalyzed by an unknown methyltransferase rather than by the CMeT domain of ppsB. Two hydroxylations and one further decarboxylation step catalyzed by yet unknown enzymes are then required to yield 4'-hydroxy-3'-methoxypropiophenone. PpsC functions as a carrier protein to transport 4'-hydroxy-3'-methoxypropiophenone to a specific cell compartment in which 4'-hydroxy-3'-methoxypropiophenone is hydroxylated to 2,4'-dihydroxy-3'-methoxypropiophenone by a still to be identified enzyme. This Aspergillus oryzae (strain ATCC 42149 / RIB 40) (Yellow koji mold) protein is 4'-hydroxy-3'-methoxypropiophenone carrier protein ppsC.